The sequence spans 844 residues: Prickle-like protein 2 (844 aa).

Residues 18–126 form the PET domain; it reads FDFQRNSTSD…NVRPFPVTMT (109 aa). The residue at position 92 (S92) is a Phosphoserine. LIM zinc-binding domains are found at residues 128–193, 193–253, and 253–317; these read AICE…CLKP, PRCA…LYAE, and EYCD…EDPN. 2 disordered regions span residues 314–350 and 481–519; these read EDPNGSDSSDSAFQNARAKESRRSAKIGKNKGKTEEP and ESYSDMSSQSFSETRGSIQVPKYEEEEEEEGGLSTQQCR. A compositionally biased stretch (polar residues) spans 318 to 327; sequence GSDSSDSAFQ. Phosphoserine occurs at positions 319, 321, and 322. Low complexity predominate over residues 481 to 493; that stretch reads ESYSDMSSQSFSE. 3 positions are modified to phosphothreonine: T534, T536, and T539. Phosphoserine occurs at positions 543, 546, 607, and 642. Positions 639 to 709 are disordered; that stretch reads MHQSFDFDGG…HLASEREAIS (71 aa). Residues 682–692 are compositionally biased toward basic residues; sequence FRPHRSRRSRR. Basic and acidic residues predominate over residues 693–709; that stretch reads SRSDNALHLASEREAIS. S731 carries the post-translational modification Phosphoserine. The disordered stretch occupies residues 822–844; sequence STLGGRGQLHSRKRQKSKNCIIS. C841 bears the Cysteine methyl ester mark. The S-farnesyl cysteine moiety is linked to residue C841. Residues 842 to 844 constitute a propeptide, removed in mature form; the sequence is IIS.

This sequence belongs to the prickle / espinas / testin family. As to expression, expressed in brain, eye and testis. Additionally in fetal brain, adult cartilage, pancreatic islet, gastric cancer and uterus tumors.

The protein localises to the nucleus membrane. The polypeptide is Prickle-like protein 2 (PRICKLE2) (Homo sapiens (Human)).